A 283-amino-acid polypeptide reads, in one-letter code: Adenylate dimethylallyltransferase (283 aa).

It belongs to the isopentenyl transferase family.

It catalyses the reaction dimethylallyl diphosphate + AMP = N(6)-(dimethylallyl)adenosine 5'-phosphate + diphosphate. Transfers dimethylallyl groups to AMP as part of the biosynthesis of cytokinin phytohormones like isopentenyl adenine or discadenine which controle spore formation and viability. The chain is Adenylate dimethylallyltransferase (iptA) from Dictyostelium discoideum (Social amoeba).